A 257-amino-acid polypeptide reads, in one-letter code: NAD-capped RNA hydrolase NudC (257 aa).

Substrate contacts are provided by lysine 25 and arginine 69. Zn(2+)-binding residues include cysteine 98 and cysteine 101. Glutamate 111 contributes to the substrate binding site. Zn(2+) is bound by residues cysteine 116 and cysteine 119. Residue tyrosine 124 coordinates substrate. One can recognise a Nudix hydrolase domain in the interval 125–248; sequence PQIAPCIIVA…TVARRLIEDT (124 aa). Residues alanine 158, glutamate 174, and glutamate 178 each coordinate a divalent metal cation. The Nudix box motif lies at 159 to 180; the sequence is GFVEVGETLEQAVAREVMEESG. A substrate-binding site is contributed by 192–199; sequence QPWPFPQS. Glutamate 219 lines the a divalent metal cation pocket. Alanine 241 is a substrate binding site.

The protein belongs to the Nudix hydrolase family. NudC subfamily. In terms of assembly, homodimer. Mg(2+) is required as a cofactor. The cofactor is Mn(2+). It depends on Zn(2+) as a cofactor.

The catalysed reaction is a 5'-end NAD(+)-phospho-ribonucleoside in mRNA + H2O = a 5'-end phospho-adenosine-phospho-ribonucleoside in mRNA + beta-nicotinamide D-ribonucleotide + 2 H(+). It carries out the reaction NAD(+) + H2O = beta-nicotinamide D-ribonucleotide + AMP + 2 H(+). The enzyme catalyses NADH + H2O = reduced beta-nicotinamide D-ribonucleotide + AMP + 2 H(+). Its function is as follows. mRNA decapping enzyme that specifically removes the nicotinamide adenine dinucleotide (NAD) cap from a subset of mRNAs by hydrolyzing the diphosphate linkage to produce nicotinamide mononucleotide (NMN) and 5' monophosphate mRNA. The NAD-cap is present at the 5'-end of some mRNAs and stabilizes RNA against 5'-processing. Has preference for mRNAs with a 5'-end purine. Catalyzes the hydrolysis of a broad range of dinucleotide pyrophosphates. In Escherichia fergusonii (strain ATCC 35469 / DSM 13698 / CCUG 18766 / IAM 14443 / JCM 21226 / LMG 7866 / NBRC 102419 / NCTC 12128 / CDC 0568-73), this protein is NAD-capped RNA hydrolase NudC.